The following is a 189-amino-acid chain: ATP synthase subunit delta (189 aa).

Belongs to the ATPase delta chain family. In terms of assembly, F-type ATPases have 2 components, F(1) - the catalytic core - and F(0) - the membrane proton channel. F(1) has five subunits: alpha(3), beta(3), gamma(1), delta(1), epsilon(1). F(0) has three main subunits: a(1), b(2) and c(10-14). The alpha and beta chains form an alternating ring which encloses part of the gamma chain. F(1) is attached to F(0) by a central stalk formed by the gamma and epsilon chains, while a peripheral stalk is formed by the delta and b chains.

Its subcellular location is the cell inner membrane. In terms of biological role, f(1)F(0) ATP synthase produces ATP from ADP in the presence of a proton or sodium gradient. F-type ATPases consist of two structural domains, F(1) containing the extramembraneous catalytic core and F(0) containing the membrane proton channel, linked together by a central stalk and a peripheral stalk. During catalysis, ATP synthesis in the catalytic domain of F(1) is coupled via a rotary mechanism of the central stalk subunits to proton translocation. Functionally, this protein is part of the stalk that links CF(0) to CF(1). It either transmits conformational changes from CF(0) to CF(1) or is implicated in proton conduction. The protein is ATP synthase subunit delta of Methylorubrum extorquens (strain CM4 / NCIMB 13688) (Methylobacterium extorquens).